We begin with the raw amino-acid sequence, 125 residues long: MSTAVTEGIEVTVRSTFRPERSEPGRFLFSYSVRVVNQGEAPAQLVSRHWIIVDANGEREEVVGDGVVGQQPHLEPGEHFEYTSFCVLKTPHGSMRGTYRMVRDDGQAFDATIAPFPLVVPGSLN.

The ApaG domain occupies 3–125 (TAVTEGIEVT…FPLVVPGSLN (123 aa)).

This is Protein ApaG from Anaeromyxobacter dehalogenans (strain 2CP-C).